The primary structure comprises 482 residues: Alanine aminotransferase 2 (482 aa).

Lysine 299 carries the post-translational modification N6-(pyridoxal phosphate)lysine.

Belongs to the class-I pyridoxal-phosphate-dependent aminotransferase family. Alanine aminotransferase subfamily. Homodimer. Pyridoxal 5'-phosphate is required as a cofactor.

The enzyme catalyses L-alanine + 2-oxoglutarate = pyruvate + L-glutamate. It functions in the pathway photosynthesis; C4 acid pathway. It participates in amino-acid degradation; L-alanine degradation via transaminase pathway; pyruvate from L-alanine: step 1/1. Functionally, transfer of C3 units between the cytosol of mesophyll and bundle sheath cells to maintain a nitrogen-carbon balance in the C4-dicarboxylic pathway. The polypeptide is Alanine aminotransferase 2 (Hordeum vulgare (Barley)).